A 203-amino-acid chain; its full sequence is Ras-related protein Rab-18 (203 aa).

GTP contacts are provided by S20, G23, K24, S25, S26, D37, P38, T43, G69, K126, D128, and A155. The short motif at 40–48 (QAATIGVDF) is the Effector region element. S-geranylgeranyl cysteine attachment occurs at residues C201 and C203. At C203 the chain carries Cysteine methyl ester.

The protein belongs to the small GTPase superfamily. Rab family.

The catalysed reaction is GTP + H2O = GDP + phosphate + H(+). In terms of biological role, the small GTPases Rab are key regulators of intracellular membrane trafficking, from the formation of transport vesicles to their fusion with membranes. Rabs cycle between an inactive GDP-bound form and an active GTP-bound form that is able to recruit to membranes different sets of downstream effectors directly responsible for vesicle formation, movement, tethering and fusion. Plays a role in apical endocytosis/recycling. May be implicated in transport between the plasma membrane and early endosomes. Plays a role in the shedding of pathogen spores from intestinal cells. The polypeptide is Ras-related protein Rab-18 (rab-18) (Caenorhabditis elegans).